We begin with the raw amino-acid sequence, 223 residues long: Phosphoribosylformylglycinamidine synthase subunit PurQ (223 aa).

The region spanning 3 to 223 (SAVILLPGLN…LFAGALGITA (221 aa)) is the Glutamine amidotransferase type-1 domain. Cysteine 87 functions as the Nucleophile in the catalytic mechanism. Catalysis depends on residues histidine 197 and glutamate 199.

Part of the FGAM synthase complex composed of 1 PurL, 1 PurQ and 2 PurS subunits.

Its subcellular location is the cytoplasm. The enzyme catalyses N(2)-formyl-N(1)-(5-phospho-beta-D-ribosyl)glycinamide + L-glutamine + ATP + H2O = 2-formamido-N(1)-(5-O-phospho-beta-D-ribosyl)acetamidine + L-glutamate + ADP + phosphate + H(+). It catalyses the reaction L-glutamine + H2O = L-glutamate + NH4(+). It participates in purine metabolism; IMP biosynthesis via de novo pathway; 5-amino-1-(5-phospho-D-ribosyl)imidazole from N(2)-formyl-N(1)-(5-phospho-D-ribosyl)glycinamide: step 1/2. In terms of biological role, part of the phosphoribosylformylglycinamidine synthase complex involved in the purines biosynthetic pathway. Catalyzes the ATP-dependent conversion of formylglycinamide ribonucleotide (FGAR) and glutamine to yield formylglycinamidine ribonucleotide (FGAM) and glutamate. The FGAM synthase complex is composed of three subunits. PurQ produces an ammonia molecule by converting glutamine to glutamate. PurL transfers the ammonia molecule to FGAR to form FGAM in an ATP-dependent manner. PurS interacts with PurQ and PurL and is thought to assist in the transfer of the ammonia molecule from PurQ to PurL. The chain is Phosphoribosylformylglycinamidine synthase subunit PurQ from Brucella abortus biovar 1 (strain 9-941).